We begin with the raw amino-acid sequence, 395 residues long: Protein BUR2 (395 aa).

Disordered regions lie at residues 1–31 (MSATSSSGDVKKFQAVPKPTSNASPPPASSG) and 372–395 (AKQESMKRKAKDPIRTPDAKKPKI). Position 24 is a phosphoserine (serine 24).

Belongs to the BUR kinase complex composed of SGV1/BUR1 and BUR2. Interacts with SGV1.

The protein resides in the nucleus. Its function is as follows. Component of the BUR kinase complex involved in transcription regulation. This complex phosphorylates 'Ser-120' of the UBC2/RAD6 ubiquitin-conjugating enzyme (E2), leading to monoubiquitination of histone H2B, the localization of the PAF1 complex to the chromatin, and the silencing of telomeric-associated genes. Also required for histone H3 'Lys-4' trimethylation. May phosphorylate the 'Ser-5' of the RBP1 carboxy-terminal domain (CTD) repeats. Necessary for the recovery from pheromone-induced growth arrest in the cell cycle G1 phase. Also required for vegetative growth itself. The kinase activity of the complex requires the presence of BUR2. Overexpression of BUR2 interferes with mitotic chromosome segregation. The polypeptide is Protein BUR2 (BUR2) (Saccharomyces cerevisiae (strain ATCC 204508 / S288c) (Baker's yeast)).